Consider the following 565-residue polypeptide: Perivitellin-2 67 kDa subunit (565 aa).

Positions 1 to 26 (MSQLRWWVVSQVLLLIAICSLDHSEG) are cleaved as a signal peptide. In terms of domain architecture, MACPF spans 27–340 (ARVCPKIVPG…AKVANLDRLT (314 aa)). Residues 387–565 (VPAWFSDRTT…CGMSWALIAK (179 aa)) are invertebrate MACPF Accessory Domain (IMAD).

As to quaternary structure, perivitellin-2 is a dimer of heterodimers held together head-to-tail by non-covalent forces. The heterodimer is composed of the tachylectin subunit (31 kDa) and the MACPF subunit (67 kDa) that are disulfide-linked. In terms of processing, PV2 is a very high density lipoprotein (VHDL). It contains 3.75% of lipids. The major lipid classes are free sterols and phospholipids and also have significant quantities of energy-providing triacylglycerides and free fatty acids. In terms of tissue distribution, produced by albumen secretory cells. Found in developing eggs.

Its subcellular location is the secreted. It is found in the target cell membrane. In terms of biological role, the egg defensive protein perivitellin-2 is a pore-forming two-subunit glycoprotein that affects both the nervous and digestive systems of mammals. In addition, it is a source of both structural and energetic molecules during embryonic development. The tachylectin subunit (31 kDa) binds target membranes while the MACPF subunit (67 kDa) disrupts lipid bilayers forming large pores (inner diameter of about 5.6 nm) altering the plasma membrance conductance. Both in vivo and in vitro, the protein shows wide pH range stability and is resistant to enzymatic proteolysis from gastrointestinal environments. It is cytotoxic to both epithelial and immune cells from the digestive system of mammals. It induces enterocyte death by a lytic mechanism and disrupts enterocyte monolayers in a dose-dependent manner. After oral administration to mice, it binds enterocytes and induces large dose-dependent morphological changes on their small intestine mucosa, reducing the absorptive surface. Additionally, it is detected in the Peyer's patches where it activates lymphoid follicles and triggers apoptosis. The toxin can also traverse the intestinal barrier and induce oral adaptive immunity with evidence of circulating antibody response. The toxin also shows hemagglutination properties thanks to the tachylectin subunit, but has no hemolytic activity. In addition to enterotoxin activity, the toxin also acts as a neurotoxin, since an intraperitoneal injection can induce paralysis of the mice rear limbs, followed by death. The sequence is that of Perivitellin-2 67 kDa subunit from Pomacea maculata (Giant applesnail).